A 169-amino-acid chain; its full sequence is S-ribosylhomocysteine lyase (169 aa).

Fe cation is bound by residues H54, H58, and C128.

This sequence belongs to the LuxS family. Homodimer. It depends on Fe cation as a cofactor.

It carries out the reaction S-(5-deoxy-D-ribos-5-yl)-L-homocysteine = (S)-4,5-dihydroxypentane-2,3-dione + L-homocysteine. Its function is as follows. Involved in the synthesis of autoinducer 2 (AI-2) which is secreted by bacteria and is used to communicate both the cell density and the metabolic potential of the environment. The regulation of gene expression in response to changes in cell density is called quorum sensing. Catalyzes the transformation of S-ribosylhomocysteine (RHC) to homocysteine (HC) and 4,5-dihydroxy-2,3-pentadione (DPD). The chain is S-ribosylhomocysteine lyase from Tolumonas auensis (strain DSM 9187 / NBRC 110442 / TA 4).